We begin with the raw amino-acid sequence, 91 residues long: Pre-early 3 receptor internalization and degradation alpha protein (91 aa).

Topologically, residues 1 to 4 (MIPR) are cytoplasmic. Residues 1–22 (MIPRVLILLTLVALFCACSTLA) constitute a propeptide, signal peptide. A helical transmembrane segment spans residues 5 to 25 (VLILLTLVALFCACSTLAAVA). Over 26–34 (HIEVDCIPP) the chain is Lumenal. The helical transmembrane segment at 35 to 60 (FTVYLLYGFVTLILICSLVTVVIAFI) threads the bilayer. Topologically, residues 61-91 (QFIDWVCVRIAYLRHHPQYRDRTIADLLRIL) are cytoplasmic.

The protein belongs to the adenoviridae E3-RID-alpha family. Homodimer with only one chain cleaved by signal peptidase. Interacts with E3 RID-beta and E3 CR1-alpha. Post-translationally, the signal peptide is only cleaved partially by host signal peptidase. This results in two forms of the protein, one uncleaved with two transmembrane regions, and one cleaved with one transmembrane region.

The protein localises to the host membrane. Its subcellular location is the host endoplasmic reticulum. Its function is as follows. Prevents infected cell apoptosis induced by the host immune system. Acts by down-regulating a number of cell surface receptors in the tumor necrosis factor (TNF) receptor superfamily, namely FAS, TNFRSF10A/TRAIL receptor 1, and TNFRSF10B/TRAIL receptor 2. Down-regulation of these death receptors protects adenovirus-infected cells from apoptosis induced by the death receptor ligands Fas ligand and TRAIL. RID complex also down-regulates certain tyrosine kinase cell surface receptors, especially the epidermal growth factor receptor (EGFR). RID-mediated Fas and EGFR down-regulation occurs via endocytosis of the receptors into endosomes followed by transport to and degradation within lysosomes. In Homo sapiens (Human), this protein is Pre-early 3 receptor internalization and degradation alpha protein.